Reading from the N-terminus, the 69-residue chain is MSVLTPLLLRGLTGSARRLPMPCARVHSKPPREQLGTMDIAIGLTSCFVCFLLPSGWVLSHLENYKKRE.

A mitochondrion-targeting transit peptide spans 1-25; the sequence is MSVLTPLLLRGLTGSARRLPMPCAR. An SIFI-degron motif is present at residues 2–19; that stretch reads SVLTPLLLRGLTGSARRL. Topologically, residues 26–36 are mitochondrial matrix; that stretch reads VHSKPPREQLG. The helical transmembrane segment at 37–60 threads the bilayer; sequence TMDIAIGLTSCFVCFLLPSGWVLS. The Mitochondrial intermembrane portion of the chain corresponds to 61–69; the sequence is HLENYKKRE.

This sequence belongs to the cytochrome c oxidase VIII family. In terms of assembly, component of the cytochrome c oxidase (complex IV, CIV), a multisubunit enzyme composed of 14 subunits. The complex is composed of a catalytic core of 3 subunits MT-CO1, MT-CO2 and MT-CO3, encoded in the mitochondrial DNA, and 11 supernumerary subunits COX4I, COX5A, COX5B, COX6A, COX6B, COX6C, COX7A, COX7B, COX7C, COX8 and NDUFA4, which are encoded in the nuclear genome. The complex exists as a monomer or a dimer and forms supercomplexes (SCs) in the inner mitochondrial membrane with NADH-ubiquinone oxidoreductase (complex I, CI) and ubiquinol-cytochrome c oxidoreductase (cytochrome b-c1 complex, complex III, CIII), resulting in different assemblies (supercomplex SCI(1)III(2)IV(1) and megacomplex MCI(2)III(2)IV(2)). Post-translationally, in response to mitochondrial stress, the precursor protein is ubiquitinated by the SIFI complex in the cytoplasm before mitochondrial import, leading to its degradation. Within the SIFI complex, UBR4 initiates ubiquitin chain that are further elongated or branched by KCMF1.

It is found in the mitochondrion inner membrane. Its pathway is energy metabolism; oxidative phosphorylation. Its function is as follows. Component of the cytochrome c oxidase, the last enzyme in the mitochondrial electron transport chain which drives oxidative phosphorylation. The respiratory chain contains 3 multisubunit complexes succinate dehydrogenase (complex II, CII), ubiquinol-cytochrome c oxidoreductase (cytochrome b-c1 complex, complex III, CIII) and cytochrome c oxidase (complex IV, CIV), that cooperate to transfer electrons derived from NADH and succinate to molecular oxygen, creating an electrochemical gradient over the inner membrane that drives transmembrane transport and the ATP synthase. Cytochrome c oxidase is the component of the respiratory chain that catalyzes the reduction of oxygen to water. Electrons originating from reduced cytochrome c in the intermembrane space (IMS) are transferred via the dinuclear copper A center (CU(A)) of subunit 2 and heme A of subunit 1 to the active site in subunit 1, a binuclear center (BNC) formed by heme A3 and copper B (CU(B)). The BNC reduces molecular oxygen to 2 water molecules using 4 electrons from cytochrome c in the IMS and 4 protons from the mitochondrial matrix. The chain is Cytochrome c oxidase subunit 8A, mitochondrial (COX8A) from Nycticebus coucang (Slow loris).